We begin with the raw amino-acid sequence, 409 residues long: Pentatricopeptide repeat-containing protein At1g31790 (409 aa).

PPR repeat units follow at residues 87–121, 122–152, 153–187, 192–226, 229–259, 260–294, 295–330, 331–361, and 363–397; these read NEDI…SIRP, TITF…MPHR, DFHS…SQKG, PSWI…GFID, DSYL…LSNA, NTVA…GIKK, NVSV…GFES, DCLI…SKDE, and SVSC…GIKA.

Belongs to the PPR family. PCMP-A subfamily.

The polypeptide is Pentatricopeptide repeat-containing protein At1g31790 (PCMP-A1) (Arabidopsis thaliana (Mouse-ear cress)).